Reading from the N-terminus, the 227-residue chain is NAD(P)H-quinone oxidoreductase subunit K, chloroplastic (227 aa).

Residues cysteine 43, cysteine 44, cysteine 108, and cysteine 139 each coordinate [4Fe-4S] cluster.

Belongs to the complex I 20 kDa subunit family. As to quaternary structure, NDH is composed of at least 16 different subunits, 5 of which are encoded in the nucleus. Requires [4Fe-4S] cluster as cofactor.

Its subcellular location is the plastid. The protein resides in the chloroplast thylakoid membrane. It catalyses the reaction a plastoquinone + NADH + (n+1) H(+)(in) = a plastoquinol + NAD(+) + n H(+)(out). It carries out the reaction a plastoquinone + NADPH + (n+1) H(+)(in) = a plastoquinol + NADP(+) + n H(+)(out). NDH shuttles electrons from NAD(P)H:plastoquinone, via FMN and iron-sulfur (Fe-S) centers, to quinones in the photosynthetic chain and possibly in a chloroplast respiratory chain. It has NADH- and deamino-NADH-specific dehydrogenase activity, using ferricyanide or quinones as acceptors. The immediate electron acceptor for the enzyme in this species is believed to be plastoquinone. Couples the redox reaction to proton translocation, and thus conserves the redox energy in a proton gradient. The sequence is that of NAD(P)H-quinone oxidoreductase subunit K, chloroplastic from Pisum sativum (Garden pea).